The chain runs to 73 residues: Conotoxin Bt11.1 (73 aa).

Positions 1 to 20 (MKLCVAFLLVLVILPSVIGG) are cleaved as a signal peptide. Positions 21 to 35 (KPSERTLSGATRRGD) are excised as a propeptide. Disulfide bonds link cysteine 39–cysteine 53, cysteine 46–cysteine 58, cysteine 52–cysteine 63, and cysteine 57–cysteine 70.

Belongs to the conotoxin I1 superfamily. Expressed by the venom duct.

The protein resides in the secreted. The sequence is that of Conotoxin Bt11.1 from Conus betulinus (Beech cone).